A 100-amino-acid chain; its full sequence is MICOS complex subunit MIC12 (100 aa).

Residues 10 to 26 traverse the membrane as a helical segment; that stretch reads FATISSVAAASLYLYAI.

Belongs to the MICOS complex subunit Mic12 family. Component of the mitochondrial contact site and cristae organizing system (MICOS) complex.

Its subcellular location is the mitochondrion inner membrane. Its function is as follows. Component of the MICOS complex, a large protein complex of the mitochondrial inner membrane that plays crucial roles in the maintenance of crista junctions, inner membrane architecture, and formation of contact sites to the outer membrane. The protein is MICOS complex subunit MIC12 (AIM5) of Vanderwaltozyma polyspora (strain ATCC 22028 / DSM 70294 / BCRC 21397 / CBS 2163 / NBRC 10782 / NRRL Y-8283 / UCD 57-17) (Kluyveromyces polysporus).